The primary structure comprises 392 residues: uncharacterized protein (392 aa).

The first 23 residues, 1–23 (MWTALVLVWISSVLLPRSHMMSA), serve as a signal peptide directing secretion. Over 24–342 (EPRNIVTNKW…DALTPSLVNK (319 aa)) the chain is Extracellular. Asn-77 carries an N-linked (GlcNAc...) asparagine glycan. Disordered regions lie at residues 83–154 (AEVT…PRTA) and 167–320 (AAGT…TDSC). Residues 86-97 (TTHGTNTSTPTT) show a composition bias toward low complexity. Polar residues-rich tracts occupy residues 107–127 (SRTL…TRPT) and 170–249 (TVNT…SAST). Asn-172 carries N-linked (GlcNAc...) asparagine glycosylation. 2 stretches are compositionally biased toward low complexity: residues 265–277 (SPTT…LPTQ) and 284–309 (TLLT…SRSS). The chain crosses the membrane as a helical span at residues 343 to 363 (MLLLVVLLVGVTLFIAVLVMF). Topologically, residues 364-392 (ALQAYESYKKKDYTQVDYLINGMYADSEM) are cytoplasmic.

It is found in the cell membrane. The protein resides in the golgi apparatus. It localises to the trans-Golgi network membrane. This is an uncharacterized protein from Mus musculus (Mouse).